We begin with the raw amino-acid sequence, 187 residues long: Ribosome maturation factor RimM (187 aa).

The region spanning 111-187 (KDEYYWVDLI…RILVDWQADF (77 aa)) is the PRC barrel domain.

Belongs to the RimM family. Binds ribosomal protein uS19.

The protein localises to the cytoplasm. Its function is as follows. An accessory protein needed during the final step in the assembly of 30S ribosomal subunit, possibly for assembly of the head region. Essential for efficient processing of 16S rRNA. May be needed both before and after RbfA during the maturation of 16S rRNA. It has affinity for free ribosomal 30S subunits but not for 70S ribosomes. The polypeptide is Ribosome maturation factor RimM (Albidiferax ferrireducens (strain ATCC BAA-621 / DSM 15236 / T118) (Rhodoferax ferrireducens)).